A 357-amino-acid polypeptide reads, in one-letter code: Alanine racemase (357 aa).

The Proton acceptor; specific for D-alanine role is filled by K33. Position 33 is an N6-(pyridoxal phosphate)lysine (K33). Substrate is bound at residue R129. The active-site Proton acceptor; specific for L-alanine is the Y253. Residue M301 participates in substrate binding.

Belongs to the alanine racemase family. Pyridoxal 5'-phosphate serves as cofactor.

The enzyme catalyses L-alanine = D-alanine. It functions in the pathway amino-acid biosynthesis; D-alanine biosynthesis; D-alanine from L-alanine: step 1/1. Catalyzes the interconversion of L-alanine and D-alanine. May also act on other amino acids. In Pseudomonas syringae pv. syringae (strain B728a), this protein is Alanine racemase (alr).